The primary structure comprises 588 residues: MGVNAVHWFRKGLRLHDNPALKECIQGADTIRCVYILDPWFAGSSNVGINRWRFLLQCLEDLDANLRKLNSRLFVIRGQPADVFPRLFKEWNITKLSIEYDSEPFGKERDAAIKKLATEAGVEVIVRISHTLYDLDKIIELNGGQPPLTYKRFQTLVSKMEPLEMPADTITSDVIGKCTTPLSDDHDEKYGVPSLEELGFDTDGLSSAVWPGGETEALTRLERHLERKAWVANFERPRMNANSLLASPTGLSPYLRFGCLSCRLFYFKLTDLYKKVKKNSSPPLSLYGQLLWREFFYTAATNNPRFDKMEGNPICVQIPWDKNPEALAKWAEGRTGFPWIDAIMTQLRQEGWIHHLARHAVACFLTRGDLWISWEEGMKVFEELLLDADWSINAGSWMWLSCSSFFQQFFHCYCPVGFGRRTDPNGDYIRRYLPVLRGFPAKYIYDPWNAPEGIQKVAKCLIGVNYPKPMVNHAEASRLNIERMKQIYQQLSRYRGLGLLASVPSNPNGNGGLMGYAPGENVPSGGSGGGNCSQGSGILHYAHGDSQQTNPLKQGRSSMGTGLSSGKRPSQEEDAQSVGPKVQRQSSN.

The Photolyase/cryptochrome alpha/beta domain maps to 3–132; that stretch reads VNAVHWFRKG…EVIVRISHTL (130 aa). Residue Lys-11 forms a Glycyl lysine isopeptide (Lys-Gly) (interchain with G-Cter in ubiquitin) linkage. Positions 50–54 match the LIR 1 motif; that stretch reads NRWRF. Ser-71 carries the post-translational modification Phosphoserine; by AMPK. Residues 82-87 carry the LIR 2 motif; it reads DVFPRL. A Glycyl lysine isopeptide (Lys-Gly) (interchain with G-Cter in ubiquitin) cross-link involves residue Lys-107. The LIR 3 motif lies at 151 to 156; the sequence is KRFQTL. A Glycyl lysine isopeptide (Lys-Gly) (interchain with G-Cter in ubiquitin) cross-link involves residue Lys-159. Phosphoserine; by MAPK is present on Ser-247. Ser-252 serves as a coordination point for FAD. 2 short sequence motifs (LIR) span residues 255–260 and 271–276; these read LRFGCL and DLYKKV. The residue at position 280 (Ser-280) is a Phosphoserine; by AMPK. The short motif at 285–290 is the LIR 6 element; that stretch reads SLYGQL. An FAD-binding site is contributed by Gln-289. A Glycyl lysine isopeptide (Lys-Gly) (interchain with G-Cter in ubiquitin) cross-link involves residue Lys-329. Residues 335–339 carry the LIR 7 motif; the sequence is TGFPW. His-355 contacts FAD. The tract at residues 371 to 470 is required for inhibition of CLOCK-BMAL1-mediated transcription; that stretch reads WISWEEGMKV…LIGVNYPKPM (100 aa). Positions 379-384 match the LIR 8 motif; the sequence is KVFEEL. 387–389 is an FAD binding site; the sequence is DAD. 3 short sequence motifs (LIR) span residues 395–400, 411–416, and 430–435; these read GSWMWL, HCYCPV, and RRYLPV. An interaction with TIMELESS region spans residues 471-493; sequence VNHAEASRLNIERMKQIYQQLSR. Lys-485 is covalently cross-linked (Glycyl lysine isopeptide (Lys-Gly) (interchain with G-Cter in ubiquitin)). 2 short sequence motifs (LIR) span residues 486-491 and 492-497; these read QIYQQL and SRYRGL. A disordered region spans residues 511–588; that stretch reads GGLMGYAPGE…GPKVQRQSSN (78 aa). The span at 545-568 shows a compositional bias: polar residues; that stretch reads DSQQTNPLKQGRSSMGTGLSSGKR. Residue Lys-567 forms a Glycyl lysine isopeptide (Lys-Gly) (interchain with G-Cter in ubiquitin) linkage. Ser-570 is subject to Phosphoserine.

This sequence belongs to the DNA photolyase class-1 family. In terms of assembly, component of the circadian core oscillator, which includes the CRY proteins, CLOCK or NPAS2, BMAL1 or BMAL2, CSNK1D and/or CSNK1E, TIMELESS, and the PER proteins. Interacts directly with TIMELESS. Interacts directly with PER1, PER2 and PER3; interaction with PER2 inhibits its ubiquitination and vice versa. Interacts with FBXL21. Interacts with FBXL3. Interacts with CLOCK-BMAL1 independently of PER2 and DNA. Interacts with HDAC1, HDAC2 and SIN3B. Interacts with nuclear receptors AR, NR1D1, NR3C1/GR, RORA and RORC; the interaction with at least NR3C1/GR is ligand dependent. Interacts with PRKDC. Interacts with the G protein subunit alpha GNAS; the interaction may block GPCR-mediated regulation of cAMP concentrations. Interacts with PRMT5. Interacts with EZH2. Interacts with MYBBP1A, DOCK7, HNRNPU, RPL7A, RPL8 and RPS3. Interacts with PPP5C (via TPR repeats). Interacts with MAP1LC3B. Interacts with CLOCK. Interacts with BMAL1. Interacts weakly with HDAC3; this interaction is enhanced in the presence of FBXL3. Interacts with TRIM28, KCTD5 and DDB1. Interacts with FOXO1. Interacts with DTL and DDB1-CUL4A complex. Interacts with HNF4A. Interacts with PSMD2 in a KDM8-dependent manner. Interacts with KDM8 in a FBXL3-dependent manner. Interacts with PPARG in a ligand-dependent manner. Interacts with PPARD (via domain NR LBD) and NR1I2 (via domain NR LBD) in a ligand-dependent manner. Interacts with PPARA, NR1I3 and VDR. FAD is required as a cofactor. It depends on (6R)-5,10-methylene-5,6,7,8-tetrahydrofolate as a cofactor. Post-translationally, phosphorylation on Ser-247 by MAPK is important for the inhibition of CLOCK-BMAL1-mediated transcriptional activity. Phosphorylation by CSNK1E requires interaction with PER1 or PER2. Phosphorylation at Ser-71 and Ser-280 by AMPK decreases protein stability. Phosphorylation at Ser-570 exhibits a robust circadian rhythm with a peak at CT8, increases protein stability, prevents SCF(FBXL3)-mediated degradation and is antagonized by interaction with PRKDC. Ubiquitinated by the SCF(FBXL3) and SCF(FBXL21) complexes, regulating the balance between degradation and stabilization. The SCF(FBXL3) complex is mainly nuclear and mediates ubiquitination and subsequent degradation of CRY1. In contrast, cytoplasmic SCF(FBXL21) complex-mediated ubiquitination leads to stabilize CRY1 and counteract the activity of the SCF(FBXL3) complex. The SCF(FBXL3) and SCF(FBXL21) complexes probably mediate ubiquitination at different Lys residues. Ubiquitination at Lys-11 and Lys-107 are specifically ubiquitinated by the SCF(FBXL21) complex but not by the SCF(FBXL3) complex. Ubiquitination may be inhibited by PER2. Deubiquitinated by USP7. In terms of processing, undergoes autophagy-mediated degradation in the liver in a time-dependent manner. Autophagic degradation of CRY1 (an inhibitor of gluconeogenesis) occurs during periods of reduced feeding allowing induction of gluconeogenesis and maintenance of blood glucose levels.

The protein resides in the cytoplasm. The protein localises to the nucleus. Transcriptional repressor which forms a core component of the circadian clock. The circadian clock, an internal time-keeping system, regulates various physiological processes through the generation of approximately 24 hour circadian rhythms in gene expression, which are translated into rhythms in metabolism and behavior. It is derived from the Latin roots 'circa' (about) and 'diem' (day) and acts as an important regulator of a wide array of physiological functions including metabolism, sleep, body temperature, blood pressure, endocrine, immune, cardiovascular, and renal function. Consists of two major components: the central clock, residing in the suprachiasmatic nucleus (SCN) of the brain, and the peripheral clocks that are present in nearly every tissue and organ system. Both the central and peripheral clocks can be reset by environmental cues, also known as Zeitgebers (German for 'timegivers'). The predominant Zeitgeber for the central clock is light, which is sensed by retina and signals directly to the SCN. The central clock entrains the peripheral clocks through neuronal and hormonal signals, body temperature and feeding-related cues, aligning all clocks with the external light/dark cycle. Circadian rhythms allow an organism to achieve temporal homeostasis with its environment at the molecular level by regulating gene expression to create a peak of protein expression once every 24 hours to control when a particular physiological process is most active with respect to the solar day. Transcription and translation of core clock components (CLOCK, NPAS2, BMAL1, BMAL2, PER1, PER2, PER3, CRY1 and CRY2) plays a critical role in rhythm generation, whereas delays imposed by post-translational modifications (PTMs) are important for determining the period (tau) of the rhythms (tau refers to the period of a rhythm and is the length, in time, of one complete cycle). A diurnal rhythm is synchronized with the day/night cycle, while the ultradian and infradian rhythms have a period shorter and longer than 24 hours, respectively. Disruptions in the circadian rhythms contribute to the pathology of cardiovascular diseases, cancer, metabolic syndromes and aging. A transcription/translation feedback loop (TTFL) forms the core of the molecular circadian clock mechanism. Transcription factors, CLOCK or NPAS2 and BMAL1 or BMAL2, form the positive limb of the feedback loop, act in the form of a heterodimer and activate the transcription of core clock genes and clock-controlled genes (involved in key metabolic processes), harboring E-box elements (5'-CACGTG-3') within their promoters. The core clock genes: PER1/2/3 and CRY1/2 which are transcriptional repressors form the negative limb of the feedback loop and interact with the CLOCK|NPAS2-BMAL1|BMAL2 heterodimer inhibiting its activity and thereby negatively regulating their own expression. This heterodimer also activates nuclear receptors NR1D1/2 and RORA/B/G, which form a second feedback loop and which activate and repress BMAL1 transcription, respectively. CRY1 and CRY2 have redundant functions but also differential and selective contributions at least in defining the pace of the SCN circadian clock and its circadian transcriptional outputs. More potent transcriptional repressor in cerebellum and liver than CRY2, though more effective in lengthening the period of the SCN oscillator. On its side, CRY2 seems to play a critical role in tuning SCN circadian period by opposing the action of CRY1. With CRY2, is dispensable for circadian rhythm generation but necessary for the development of intercellular networks for rhythm synchrony. Capable of translocating circadian clock core proteins such as PER proteins to the nucleus. Interacts with CLOCK-BMAL1 independently of PER proteins and is found at CLOCK-BMAL1-bound sites, suggesting that CRY may act as a molecular gatekeeper to maintain CLOCK-BMAL1 in a poised and repressed state until the proper time for transcriptional activation. Represses the CLOCK-BMAL1 induced transcription of BHLHE40/DEC1, ATF4, MTA1, KLF10 and NAMPT. May repress circadian target genes expression in collaboration with HDAC1 and HDAC2 through histone deacetylation. Mediates the clock-control activation of ATR and modulates ATR-mediated DNA damage checkpoint. In liver, mediates circadian regulation of cAMP signaling and gluconeogenesis by binding to membrane-coupled G proteins and blocking glucagon-mediated increases in intracellular cAMP concentrations and CREB1 phosphorylation. Inhibits hepatic gluconeogenesis by decreasing nuclear FOXO1 levels that down-regulates gluconeogenic gene expression. Besides its role in the maintenance of the circadian clock, is also involved in the regulation of other processes. Represses glucocorticoid receptor NR3C1/GR-induced transcriptional activity by binding to glucocorticoid response elements (GREs). Plays a key role in glucose and lipid metabolism modulation, in part, through the transcriptional regulation of genes involved in these pathways, such as LEP or ACSL4. Represses PPARD and its target genes in the skeletal muscle and limits exercise capacity. Plays an essential role in the generation of circadian rhythms in the retina. Represses the transcriptional activity of NR1I2. The protein is Cryptochrome-1 (Cry1) of Rattus norvegicus (Rat).